Here is a 377-residue protein sequence, read N- to C-terminus: MNPTTQKLVEQNAPAQLVDHNLVPETVCPGVLYEKRPARNLKGEVVPGLYNVWISLDNPKQYNSYTTDMVKGLILAFRAASCARDVASVVFTAVGDKAFCTGGNTKEYAEYYAGNPQEYRQYMRLFNDMVSAILGCDKPVICRVNGMRIGGGQEIGMAADFTVAQDLANFGQAGPKHGSAAIGGATDFLPLMIGCEQAMVSGTLCEPFSAHKANRLGICMQIVPALKVDGKFIANPLVVTDRYLDEFGRIIHGEFKTGDELAAGKELMKRGEIDLSLLDEAVEKLCAKLISTFPECLTKSFEELRKPKLDAWNRNKENSRAWLALNMMNEARTGFRAFNEGNKETGREIEFTDLRQALAKGMPWTPELIESLMPGAK.

It belongs to the enoyl-CoA hydratase/isomerase family. Homotetramer.

It catalyses the reaction 6-oxocyclohex-1-ene-1-carbonyl-CoA + 2 H2O = 3-hydroxy-6-carboxyhexanoyl-CoA + H(+). The protein operates within aromatic compound metabolism; benzoyl-CoA degradation. Functionally, involved in the central benzoyl-CoA catabolism. Catalyzes the addition of one molecule of water to the double bond and the hydrolytic cleavage of C-C bond in the alicyclic ring, 6-oxocyclohex-1-ene-1-carbonyl-CoA (6-OCH-CoA) to yield 3-hydroxypimelyl-CoA. This is 6-oxocyclohex-1-ene-1-carbonyl-CoA hydrolase (oah) from Thauera aromatica.